We begin with the raw amino-acid sequence, 423 residues long: Enolase (423 aa).

Gln-163 contacts (2R)-2-phosphoglycerate. Glu-205 (proton donor) is an active-site residue. The Mg(2+) site is built by Asp-242, Glu-285, and Asp-312. 4 residues coordinate (2R)-2-phosphoglycerate: Lys-337, Arg-366, Ser-367, and Lys-388. Lys-337 functions as the Proton acceptor in the catalytic mechanism.

Belongs to the enolase family. Mg(2+) is required as a cofactor.

The protein resides in the cytoplasm. Its subcellular location is the secreted. It localises to the cell surface. The catalysed reaction is (2R)-2-phosphoglycerate = phosphoenolpyruvate + H2O. It functions in the pathway carbohydrate degradation; glycolysis; pyruvate from D-glyceraldehyde 3-phosphate: step 4/5. In terms of biological role, catalyzes the reversible conversion of 2-phosphoglycerate (2-PG) into phosphoenolpyruvate (PEP). It is essential for the degradation of carbohydrates via glycolysis. The polypeptide is Enolase (Desulforapulum autotrophicum (strain ATCC 43914 / DSM 3382 / VKM B-1955 / HRM2) (Desulfobacterium autotrophicum)).